A 429-amino-acid polypeptide reads, in one-letter code: MQFKNALTATAILSASALAANSTTSIPSSCSIGTSATATAQADLDKISGCSTIVGNLTITGDLGSAALASIQEIDGSLTIFNSSSLSSFSADSIKKITGDLNMQELIILTSASFGSLQEVDSINMVTLPAISTFSTDLQNANNIIVSDTTLESVEGFSTLKKVNVFNINNNRYLNSFQSSLESVSDSLQFSSNGDNTTLAFDNLVWANNITLRDVNSISFGSLQTVNASLGFINNTLPSLNLTQLSKVGQSLSIVSNDELSKAAFSNLTTVGGGFIIANNTQLKVIDGFNKVQTVGGAIEVTGNFSTLDLSSLKSVRGGANFDSSSSNFSCNALKKLQSNGAIQGDSFVCKNGATSTSVKLSSTSTESSKSSATSSASSSGDASNAQASVSASASSSSSSSKKSKGAAPELVPATSFMGVVAAVAVALL.

The signal sequence occupies residues 1–19 (MQFKNALTATAILSASALA). N-linked (GlcNAc...) asparagine glycans are attached at residues asparagine 21, asparagine 56, asparagine 82, asparagine 196, asparagine 209, asparagine 227, asparagine 234, asparagine 241, asparagine 267, asparagine 279, asparagine 304, and asparagine 328. Serine 339 bears the Phosphoserine mark. A compositionally biased stretch (low complexity) spans 361–401 (LSSTSTESSKSSATSSASSSGDASNAQASVSASASSSSSSS). Residues 361–410 (LSSTSTESSKSSATSSASSSGDASNAQASVSASASSSSSSSKKSKGAAPE) form a disordered region. The GPI-anchor amidated glycine moiety is linked to residue glycine 406. Residues 407-429 (AAPELVPATSFMGVVAAVAVALL) constitute a propeptide, removed in mature form.

This sequence belongs to the SPS2 family. Post-translationally, the GPI-anchor is attached to the protein in the endoplasmic reticulum and serves to target the protein to the cell surface. There, the glucosamine-inositol phospholipid moiety is cleaved off and the GPI-modified mannoprotein is covalently attached via its lipidless GPI glycan remnant to the 1,6-beta-glucan of the outer cell wall layer.

It is found in the cell membrane. The protein resides in the secreted. It localises to the cell wall. Its function is as follows. Required for proper cell wall integrity and for the correct assembly of the mannoprotein outer layer of the cell wall. Important for apical bud growth. The polypeptide is Cell wall protein ECM33 (ECM33) (Saccharomyces cerevisiae (strain YJM789) (Baker's yeast)).